Reading from the N-terminus, the 237-residue chain is Class B acid phosphatase (237 aa).

The first 23 residues, 1–23 (MKKITLALSAVCLLFTLNHSANA), serve as a signal peptide directing secretion. The Nucleophile role is filled by aspartate 69. Positions 69 and 71 each coordinate Mg(2+). The active-site Proton donor is aspartate 71. Substrate contacts are provided by residues 137–138 (TG) and lysine 177. Aspartate 192 provides a ligand contact to Mg(2+).

Belongs to the class B bacterial acid phosphatase family. Homotetramer. Mg(2+) is required as a cofactor.

Its subcellular location is the periplasm. The enzyme catalyses a phosphate monoester + H2O = an alcohol + phosphate. Functionally, dephosphorylates several organic phosphate monoesters including monophosphate nucleotides (NMPs), coenzyme A (CoA), nicotinamide adenine dinucleotide phosphate (NADP), flavin mononucleotide (FMN) and phosphorylated 5-6 carbon sugars in vitro. Also has a phosphotransferase activity catalyzing the transfer of low-energy phosphate groups from organic phosphate monoesters to free hydroxyl groups of various organic compounds. The polypeptide is Class B acid phosphatase (aphA) (Salmonella typhi).